Consider the following 148-residue polypeptide: UPF0178 protein Pcar_2632 (148 aa).

This sequence belongs to the UPF0178 family.

This chain is UPF0178 protein Pcar_2632, found in Syntrophotalea carbinolica (strain DSM 2380 / NBRC 103641 / GraBd1) (Pelobacter carbinolicus).